Reading from the N-terminus, the 835-residue chain is Beta-galactosidase (835 aa).

The signal sequence occupies residues 1–22; that stretch reads MGFWMAMLLMLLLCLWVSCGIA. Glu180 acts as the Proton donor in catalysis. The active-site Nucleophile is the Glu249. Residues 749-835 form the SUEL-type lectin domain; the sequence is RPLRPKAHLK…KKLSVEAICS (87 aa).

This sequence belongs to the glycosyl hydrolase 35 family.

It catalyses the reaction Hydrolysis of terminal non-reducing beta-D-galactose residues in beta-D-galactosides.. Involved in cell wall degradation. Degrades polysaccharides containing beta-(1--&gt;4)-linked galactans, acting as an exo-(1--&gt;4)-beta-D-galactanase. This Solanum lycopersicum (Tomato) protein is Beta-galactosidase.